Reading from the N-terminus, the 92-residue chain is Defensin-like protein 96 (92 aa).

An N-terminal signal peptide occupies residues Met1–Gly29. Intrachain disulfides connect Cys33/Cys80, Cys40/Cys65, Cys49/Cys77, and Cys53/Cys79.

The protein belongs to the DEFL family.

Its subcellular location is the secreted. This chain is Defensin-like protein 96, found in Arabidopsis thaliana (Mouse-ear cress).